The sequence spans 84 residues: Large ribosomal subunit protein bL27 (84 aa).

A disordered region spans residues 1–22 (MAHKKGGGSTKNGRDSNPKYLG).

Belongs to the bacterial ribosomal protein bL27 family.

This Prosthecochloris aestuarii (strain DSM 271 / SK 413) protein is Large ribosomal subunit protein bL27.